The primary structure comprises 279 residues: Urease accessory protein UreD (279 aa).

Belongs to the UreD family. As to quaternary structure, ureD, UreF and UreG form a complex that acts as a GTP-hydrolysis-dependent molecular chaperone, activating the urease apoprotein by helping to assemble the nickel containing metallocenter of UreC. The UreE protein probably delivers the nickel.

Its subcellular location is the cytoplasm. Its function is as follows. Required for maturation of urease via the functional incorporation of the urease nickel metallocenter. This is Urease accessory protein UreD from Paracoccus denitrificans (strain Pd 1222).